An 84-amino-acid chain; its full sequence is Small ribosomal subunit protein uS17 (84 aa).

The protein belongs to the universal ribosomal protein uS17 family. In terms of assembly, part of the 30S ribosomal subunit.

Functionally, one of the primary rRNA binding proteins, it binds specifically to the 5'-end of 16S ribosomal RNA. This Blochmanniella pennsylvanica (strain BPEN) protein is Small ribosomal subunit protein uS17.